The chain runs to 506 residues: Nostrin (506 aa).

An F-BAR domain is found at 1-260 (MRDPLTDCSY…AISKVDVEKD (260 aa)). At serine 114 the chain carries Phosphoserine. Coiled coils occupy residues 160–230 (SLTQ…LNQY) and 305–334 (KLGR…ASSS). An REM-1 domain is found at 292–372 (PMDKERRKSL…SYKLSSVLAD (81 aa)). Residues 413 to 435 (KAESKAPAGGQNNPSSSPSGSTV) form a disordered region. Low complexity predominate over residues 419–435 (PAGGQNNPSSSPSGSTV). Residues 438 to 497 (ASKHLCKALYTFQARQDDELNLEKGDIVTVHEKKEEGWWFGSLKGKRGHFPAAYVEELPP) enclose the SH3 domain. At serine 479 the chain carries Phosphoserine.

In terms of assembly, homotrimer. Interacts with NOS3, DNM2, WASL and CAV1. Interacts with DAB2. Interacts (via SH3 domain) with DNM2; this interaction allows the recruitment of NOS3 to dynamin-positive structures.

Its subcellular location is the cell membrane. It localises to the cytoplasmic vesicle. The protein resides in the cytoplasm. The protein localises to the cytoskeleton. It is found in the nucleus. Its function is as follows. Multivalent adapter protein which may decrease NOS3 activity by inducing its translocation away from the plasma membrane. This is Nostrin from Mus musculus (Mouse).